Consider the following 191-residue polypeptide: Protein GrpE (191 aa).

A disordered region spans residues 1-22 (MKDKHNQEHDHLSQEEPESCEK).

This sequence belongs to the GrpE family. In terms of assembly, homodimer.

Its subcellular location is the cytoplasm. Its function is as follows. Participates actively in the response to hyperosmotic and heat shock by preventing the aggregation of stress-denatured proteins, in association with DnaK and GrpE. It is the nucleotide exchange factor for DnaK and may function as a thermosensor. Unfolded proteins bind initially to DnaJ; upon interaction with the DnaJ-bound protein, DnaK hydrolyzes its bound ATP, resulting in the formation of a stable complex. GrpE releases ADP from DnaK; ATP binding to DnaK triggers the release of the substrate protein, thus completing the reaction cycle. Several rounds of ATP-dependent interactions between DnaJ, DnaK and GrpE are required for fully efficient folding. The sequence is that of Protein GrpE from Helicobacter pylori (strain Shi470).